The primary structure comprises 73 residues: Sec-independent protein translocase protein TatA (73 aa).

The helical transmembrane segment at 1-21 threads the bilayer; it reads MGSFSIWHWVIVLVVVVLIFG. The segment at 43-73 is disordered; it reads MKSEGEDAAQTPPAAQKEGGRVIDAEPADKK. The span at 60-73 shows a compositional bias: basic and acidic residues; that stretch reads EGGRVIDAEPADKK.

It belongs to the TatA/E family. In terms of assembly, the Tat system comprises two distinct complexes: a TatABC complex, containing multiple copies of TatA, TatB and TatC subunits, and a separate TatA complex, containing only TatA subunits. Substrates initially bind to the TatABC complex, which probably triggers association of the separate TatA complex to form the active translocon.

The protein localises to the cell inner membrane. In terms of biological role, part of the twin-arginine translocation (Tat) system that transports large folded proteins containing a characteristic twin-arginine motif in their signal peptide across membranes. TatA could form the protein-conducting channel of the Tat system. This chain is Sec-independent protein translocase protein TatA, found in Laribacter hongkongensis (strain HLHK9).